Here is a 691-residue protein sequence, read N- to C-terminus: Elongation factor G (691 aa).

One can recognise a tr-type G domain in the interval 12 to 286 (KKLRNIGIMA…GILEYLPSPL (275 aa)). GTP is bound by residues 21–28 (AHIDAGKT), 85–89 (DTPGH), and 139–142 (NKMD).

This sequence belongs to the TRAFAC class translation factor GTPase superfamily. Classic translation factor GTPase family. EF-G/EF-2 subfamily.

Its subcellular location is the cytoplasm. Functionally, catalyzes the GTP-dependent ribosomal translocation step during translation elongation. During this step, the ribosome changes from the pre-translocational (PRE) to the post-translocational (POST) state as the newly formed A-site-bound peptidyl-tRNA and P-site-bound deacylated tRNA move to the P and E sites, respectively. Catalyzes the coordinated movement of the two tRNA molecules, the mRNA and conformational changes in the ribosome. The polypeptide is Elongation factor G (Thermosipho africanus (strain TCF52B)).